The following is a 958-amino-acid chain: Isoleucine--tRNA ligase (958 aa).

The interval 1-32 (MSDNQNKPGKPAAKPQSKYPVNMTDTPFPMRG) is disordered. The 'HIGH' region motif lies at 71 to 81 (PYANGDIHLGH). Glutamate 590 contributes to the L-isoleucyl-5'-AMP binding site. A 'KMSKS' region motif is present at residues 631-635 (KMSKS). Lysine 634 is an ATP binding site. Cysteine 921, cysteine 924, cysteine 941, and cysteine 944 together coordinate Zn(2+).

Belongs to the class-I aminoacyl-tRNA synthetase family. IleS type 1 subfamily. Monomer. Requires Zn(2+) as cofactor.

The protein localises to the cytoplasm. It carries out the reaction tRNA(Ile) + L-isoleucine + ATP = L-isoleucyl-tRNA(Ile) + AMP + diphosphate. Its function is as follows. Catalyzes the attachment of isoleucine to tRNA(Ile). As IleRS can inadvertently accommodate and process structurally similar amino acids such as valine, to avoid such errors it has two additional distinct tRNA(Ile)-dependent editing activities. One activity is designated as 'pretransfer' editing and involves the hydrolysis of activated Val-AMP. The other activity is designated 'posttransfer' editing and involves deacylation of mischarged Val-tRNA(Ile). In Janthinobacterium sp. (strain Marseille) (Minibacterium massiliensis), this protein is Isoleucine--tRNA ligase.